A 164-amino-acid polypeptide reads, in one-letter code: uncharacterized protein (164 aa).

This is an uncharacterized protein from Escherichia coli (strain K12).